The chain runs to 163 residues: Interleukin-17F (163 aa).

The N-terminal stretch at 1–30 is a signal peptide; that stretch reads MTVKTLHGPAMVKYLLLSILGLAFLSEAAA. Residue asparagine 83 is glycosylated (N-linked (GlcNAc...) asparagine). 2 disulfides stabilise this stretch: cysteine 102–cysteine 152 and cysteine 107–cysteine 154.

It belongs to the IL-17 family. As to quaternary structure, homodimer; disulfide-linked. Heterodimer with IL17A (IL17A-IL17F). Forms complexes with IL17RA and IL17RC receptors with 2:1 binding stoichiometry: two receptor chains for one interleukin molecule. IL17F homodimer forms predominantly complexes with IL17RC homodimer, whereas IL17A-IL17F favors complexes with IL17RA-IL17RC. IL17RA and IL17RC chains cannot distinguish between IL17A and IL17F molecules, potentially enabling the formation of topologically distinct complexes. In terms of tissue distribution, expressed in T-helper 1 and T-helper 2 cells, basophils and mast cells.

It localises to the secreted. In terms of biological role, effector cytokine of innate and adaptive immune system involved in antimicrobial host defense and maintenance of tissue integrity. IL17A-IL17F signals via IL17RA-IL17RC heterodimeric receptor complex, triggering homotypic interaction of IL17RA and IL17RC chains with TRAF3IP2 adapter through SEFIR domains. This leads to downstream TRAF6-mediated activation of NF-kappa-B and MAPkinase pathways ultimately resulting in transcriptional activation of cytokines, chemokines, antimicrobial peptides and matrix metalloproteinases, with potential strong immune inflammation. IL17A-IL17F is primarily involved in host defense against extracellular bacteria and fungi by inducing neutrophilic inflammation. As signature effector cytokine of T-helper 17 cells (Th17), primarily induces neutrophil activation and recruitment at infection and inflammatory sites. Stimulates the production of antimicrobial beta-defensins DEFB1, DEFB103A, and DEFB104A by mucosal epithelial cells, limiting the entry of microbes through the epithelial barriers. IL17F homodimer can signal via IL17RC homodimeric receptor complex, triggering downstream activation of TRAF6 and NF-kappa-B signaling pathway. Via IL17RC induces transcriptional activation of IL33, a potent cytokine that stimulates group 2 innate lymphoid cells and adaptive T-helper 2 cells involved in pulmonary allergic response to fungi. Likely via IL17RC, promotes sympathetic innervation of peripheral organs by coordinating the communication between gamma-delta T cells and parenchymal cells. Stimulates sympathetic innervation of thermogenic adipose tissue by driving TGFB1 expression. Regulates the composition of intestinal microbiota and immune tolerance by inducing antimicrobial proteins that specifically control the growth of commensal Firmicutes and Bacteroidetes. The polypeptide is Interleukin-17F (IL17F) (Homo sapiens (Human)).